Here is a 182-residue protein sequence, read N- to C-terminus: Adenine phosphoribosyltransferase (182 aa).

It belongs to the purine/pyrimidine phosphoribosyltransferase family. Homodimer.

Its subcellular location is the cytoplasm. It catalyses the reaction AMP + diphosphate = 5-phospho-alpha-D-ribose 1-diphosphate + adenine. Its pathway is purine metabolism; AMP biosynthesis via salvage pathway; AMP from adenine: step 1/1. In terms of biological role, catalyzes a salvage reaction resulting in the formation of AMP, that is energically less costly than de novo synthesis. This is Adenine phosphoribosyltransferase from Campylobacter curvus (strain 525.92).